The following is a 495-amino-acid chain: UDP-glycosyltransferase 73C25 (495 aa).

23–26 provides a ligand contact to UDP-alpha-D-glucose; sequence GHMI. His24 serves as the catalytic Proton acceptor. The Charge relay role is filled by Asp129. UDP-alpha-D-glucose-binding positions include 355-358, 373-381, and 397-398; these read WSPQ, HCGWNSTLE, and DQ.

It belongs to the UDP-glycosyltransferase family.

Catalyzes the transfer of a glucose (Glc) moiety from UDP-Glc to the C-28 carboxylic group of oleanolate 3-O-beta-D-glucoside to form oleanolate 3,28-O-beta-D-diglucoside. The chain is UDP-glycosyltransferase 73C25 from Barbarea vulgaris (Yellow rocket).